The chain runs to 735 residues: Transmembrane channel-like protein 7 (735 aa).

At 1-164 (MSEFGAGAEL…QSYFSFLRFL (164 aa)) the chain is on the extracellular side. The chain crosses the membrane as a helical span at residues 165-185 (VLLNFLMFILMFSFVTLPAVI). Residues 186–233 (SNYGIFNSSSTKISPNNTEPYCTVYTPSGNKGLVYFYTYLKDLLTGTG) lie on the Cytoplasmic side of the membrane. The chain crosses the membrane as a helical span at residues 234 to 254 (FLEVTVLFYGYYTIDAAWFSV). Residues 255–258 (LRYN) are Extracellular-facing. Residues 259 to 279 (LPLAYLLTTFAYLALSFVWII) traverse the membrane as a helical segment. The Cytoplasmic segment spans residues 280 to 355 (KRSVERFRQH…TMKEKLQIYS (76 aa)). A helical membrane pass occupies residues 356 to 376 (LRIFINIIVIAVLSGCFYSIY). The Extracellular segment spans residues 377–403 (RATVFSQENSSVSIRRNVMIANLLVQY). The N-linked (GlcNAc...) asparagine glycan is linked to Asn-385. Residues 404–424 (LPSIVITSANFIAPQIFSFLI) traverse the membrane as a helical segment. Residues 425–436 (RFEDYSAAFEIR) lie on the Cytoplasmic side of the membrane. A helical transmembrane segment spans residues 437–457 (LTLIRCVFVRLANVGVLLFSL). Residues 458–488 (WSQIHCDNDQCKACGYDYELYPCWESAVGQE) are Extracellular-facing. A helical transmembrane segment spans residues 489-509 (MYKLLIFDFMIIIAMTLFVDF). Over 510–548 (PRKLLVTYCSWKLVQWWGLQEFGISDNVLEIIYGQTICW) the chain is Cytoplasmic. Residues 549–569 (IGTFFSPLLPAIATIKYFIIF) traverse the membrane as a helical segment. The Extracellular portion of the chain corresponds to 570 to 594 (YIKKISLIHTRKPASRPIRASSSNF). The helical transmembrane segment at 595-615 (FFLAVLLIGLILAFVPLGVSI) threads the bilayer. Residues 616-634 (ALISSSKACGPFRNFNTSW) are Cytoplasmic-facing. The chain crosses the membrane as a helical span at residues 635–655 (AIVPYTILEFPIGLQKFLYGI). The Extracellular segment spans residues 656–658 (ASE). Residues 659 to 679 (AFAVPFFVIACLFMFYFIALA) traverse the membrane as a helical segment. Residues 680–735 (GAHKRVVEQLREQLVTESRDKLFLLEKLSEAQKNSGKPQKARKLTSSWLLEPLDKG) lie on the Cytoplasmic side of the membrane. The tract at residues 710–735 (AQKNSGKPQKARKLTSSWLLEPLDKG) is disordered.

The protein belongs to the TMC family.

It is found in the membrane. Its function is as follows. Probable component of an ion channel. The polypeptide is Transmembrane channel-like protein 7 (Tmc7) (Gallus gallus (Chicken)).